Reading from the N-terminus, the 585-residue chain is Bifunctional purine biosynthesis protein ade10 (585 aa).

The 142-residue stretch at 1–142 folds into the MGS-like domain; it reads MYALLSVYDK…KNHARVTILS (142 aa). Residues 30 to 33, 60 to 63, 97 to 98, and 121 to 122 each bind IMP; these read SGGT, RVKT, CN, and DI. K133 (proton donor/acceptor; for FAICAR cyclization activity) is an active-site residue. Residues 200-201, H260, G308, D331, N423, and R443 each bind 5-amino-1-(5-phospho-beta-D-ribosyl)imidazole-4-carboxamide; that span reads RY. The active-site Proton acceptor; for AICAR formyltransferase activity is H260. Residue I444 participates in (6R)-10-formyltetrahydrofolate binding. F534 lines the 5-amino-1-(5-phospho-beta-D-ribosyl)imidazole-4-carboxamide pocket. Residues D539 and 558-559 each bind (6R)-10-formyltetrahydrofolate; that span reads SV. 5-amino-1-(5-phospho-beta-D-ribosyl)imidazole-4-carboxamide is bound at residue R581.

It belongs to the PurH family. As to quaternary structure, homodimer.

It is found in the cytoplasm. The protein resides in the cytosol. It carries out the reaction (6R)-10-formyltetrahydrofolate + 5-amino-1-(5-phospho-beta-D-ribosyl)imidazole-4-carboxamide = 5-formamido-1-(5-phospho-D-ribosyl)imidazole-4-carboxamide + (6S)-5,6,7,8-tetrahydrofolate. The enzyme catalyses IMP + H2O = 5-formamido-1-(5-phospho-D-ribosyl)imidazole-4-carboxamide. It functions in the pathway purine metabolism; IMP biosynthesis via de novo pathway; 5-formamido-1-(5-phospho-D-ribosyl)imidazole-4-carboxamide from 5-amino-1-(5-phospho-D-ribosyl)imidazole-4-carboxamide (10-formyl THF route): step 1/1. The protein operates within purine metabolism; IMP biosynthesis via de novo pathway; IMP from 5-formamido-1-(5-phospho-D-ribosyl)imidazole-4-carboxamide: step 1/1. Functionally, bifunctional enzyme that catalyzes the last two steps of purine biosynthesis. Acts as a transformylase that incorporates a formyl group to the AMP analog AICAR (5-amino-1-(5-phospho-beta-D-ribosyl)imidazole-4-carboxamide) to produce the intermediate formyl-AICAR (FAICAR). Also catalyzes the cyclization of FAICAR to IMP. The protein is Bifunctional purine biosynthesis protein ade10 (ade10) of Schizosaccharomyces pombe (strain 972 / ATCC 24843) (Fission yeast).